Reading from the N-terminus, the 368-residue chain is 4-hydroxy-3-methylbut-2-en-1-yl diphosphate synthase (flavodoxin) (368 aa).

[4Fe-4S] cluster contacts are provided by C271, C274, C306, and E313.

Belongs to the IspG family. [4Fe-4S] cluster is required as a cofactor.

It carries out the reaction (2E)-4-hydroxy-3-methylbut-2-enyl diphosphate + oxidized [flavodoxin] + H2O + 2 H(+) = 2-C-methyl-D-erythritol 2,4-cyclic diphosphate + reduced [flavodoxin]. Its pathway is isoprenoid biosynthesis; isopentenyl diphosphate biosynthesis via DXP pathway; isopentenyl diphosphate from 1-deoxy-D-xylulose 5-phosphate: step 5/6. In terms of biological role, converts 2C-methyl-D-erythritol 2,4-cyclodiphosphate (ME-2,4cPP) into 1-hydroxy-2-methyl-2-(E)-butenyl 4-diphosphate. In Mannheimia succiniciproducens (strain KCTC 0769BP / MBEL55E), this protein is 4-hydroxy-3-methylbut-2-en-1-yl diphosphate synthase (flavodoxin).